The primary structure comprises 273 residues: Pyrroline-5-carboxylate reductase (273 aa).

It belongs to the pyrroline-5-carboxylate reductase family.

It localises to the cytoplasm. It carries out the reaction L-proline + NADP(+) = (S)-1-pyrroline-5-carboxylate + NADPH + 2 H(+). The catalysed reaction is L-proline + NAD(+) = (S)-1-pyrroline-5-carboxylate + NADH + 2 H(+). It functions in the pathway amino-acid biosynthesis; L-proline biosynthesis; L-proline from L-glutamate 5-semialdehyde: step 1/1. In terms of biological role, catalyzes the reduction of 1-pyrroline-5-carboxylate (PCA) to L-proline. The protein is Pyrroline-5-carboxylate reductase of Pseudomonas aeruginosa (strain ATCC 15692 / DSM 22644 / CIP 104116 / JCM 14847 / LMG 12228 / 1C / PRS 101 / PAO1).